We begin with the raw amino-acid sequence, 541 residues long: Coiled-coil domain-containing protein 116 (541 aa).

Residues 79–102 (QVLDSLQTVVEQATERLAAMKTEA) adopt a coiled-coil conformation. Positions 346–397 (LPGNSDLLQPSSKASIPTNREARGEPCDSLTTAYSPKTSHRKSKGRRGSPPN) are disordered. Over residues 351–363 (DLLQPSSKASIPT) the composition is skewed to polar residues. Residues 383–392 (TSHRKSKGRR) show a composition bias toward basic residues. Serine 394 carries the post-translational modification Phosphoserine.

The protein localises to the cytoplasm. The protein resides in the cytoskeleton. It localises to the microtubule organizing center. It is found in the centrosome. The polypeptide is Coiled-coil domain-containing protein 116 (Ccdc116) (Mus musculus (Mouse)).